A 1068-amino-acid chain; its full sequence is Huntingtin-interacting protein 1-related protein (1068 aa).

The residue at position 1 (methionine 1) is an N-acetylmethionine. One can recognise an ENTH domain in the interval 23-151 (EREQFDKTQA…SFHLKHPQFP (129 aa)). Residues 346–644 (GSMKDDRDLQ…LQDAVSKLDD (299 aa)) are a coiled coil. Positions 582–610 (EALSQEQQRSSQEKGELRGQLAEKESQEQ) are disordered. Residues 592–608 (SQEKGELRGQLAEKESQ) show a composition bias toward basic and acidic residues. The region spanning 771–1012 (SLDVRQEELG…ELRKQHYVLA (242 aa)) is the I/LWEQ domain. The important for actin binding stretch occupies residues 867–924 (RWTEGLISASKAVGWGATQLVESADKVVLHMGKYEELIVCSHEIAASTAQLVAASKVK). Residues 1011–1068 (LAGGMGTPSEEEPSRPSPAPRSGATKKPPLAQKPSIAPRTDNQLDKKDGVYPAQLVNY) form a disordered region.

The protein belongs to the SLA2 family. In terms of assembly, homodimer. Interacts with actin; homodimerization promotes actin binding. Interacts with CLTB. Interacts with HIP1. Interacts (via ENTH and I/LWEQ domains) with BCL2L10. As to expression, widely expressed. Expressed at lower levels in skeletal muscle and heart. The level of expression does not change appreciably during development.

The protein resides in the cytoplasm. The protein localises to the perinuclear region. It localises to the endomembrane system. It is found in the cytoplasmic vesicle. Its subcellular location is the clathrin-coated vesicle membrane. Functionally, component of clathrin-coated pits and vesicles, that may link the endocytic machinery to the actin cytoskeleton. Binds 3-phosphoinositides (via ENTH domain). May act through the ENTH domain to promote cell survival by stabilizing receptor tyrosine kinases following ligand-induced endocytosis. The chain is Huntingtin-interacting protein 1-related protein (Hip1r) from Mus musculus (Mouse).